A 105-amino-acid chain; its full sequence is Large ribosomal subunit protein bL21 (105 aa).

This sequence belongs to the bacterial ribosomal protein bL21 family. Part of the 50S ribosomal subunit. Contacts protein L20.

In terms of biological role, this protein binds to 23S rRNA in the presence of protein L20. The sequence is that of Large ribosomal subunit protein bL21 from Phocaeicola vulgatus (strain ATCC 8482 / DSM 1447 / JCM 5826 / CCUG 4940 / NBRC 14291 / NCTC 11154) (Bacteroides vulgatus).